The chain runs to 413 residues: uncharacterized protein (413 aa).

Residues 14 to 34 traverse the membrane as a helical segment; sequence LLFFTVVIIPIFYYIYKIVYL. Residues asparagine 46, asparagine 55, asparagine 103, asparagine 171, asparagine 179, asparagine 184, asparagine 220, asparagine 252, asparagine 260, asparagine 273, asparagine 362, asparagine 366, asparagine 374, asparagine 378, asparagine 393, and asparagine 408 are each glycosylated (N-linked (GlcNAc...) asparagine; by host). The segment covering 250–263 has biased composition (low complexity); it reads TKNSTETNSDNNSE. The interval 250–277 is disordered; that stretch reads TKNSTETNSDNNSEIVSETNSETNYSTP. Residues 264–277 are compositionally biased toward polar residues; sequence IVSETNSETNYSTP.

Its subcellular location is the membrane. This is an uncharacterized protein from Acanthamoeba polyphaga (Amoeba).